The following is a 338-amino-acid chain: Ketol-acid reductoisomerase (NADP(+)) (338 aa).

The region spanning 1 to 181 is the KARI N-terminal Rossmann domain; it reads MKVFYDKDAD…GGGRAGIIET (181 aa). NADP(+) is bound by residues 24 to 27, Arg47, and Ser52; that span reads YGSQ. His107 is an active-site residue. An NADP(+)-binding site is contributed by Gly133. A KARI C-terminal knotted domain is found at 182–327; it reads NFREETETDL…AKLRAMMPWI (146 aa). Residues Asp190, Glu194, Glu226, and Glu230 each contribute to the Mg(2+) site. Position 251 (Ser251) interacts with substrate.

This sequence belongs to the ketol-acid reductoisomerase family. Requires Mg(2+) as cofactor.

It catalyses the reaction (2R)-2,3-dihydroxy-3-methylbutanoate + NADP(+) = (2S)-2-acetolactate + NADPH + H(+). The catalysed reaction is (2R,3R)-2,3-dihydroxy-3-methylpentanoate + NADP(+) = (S)-2-ethyl-2-hydroxy-3-oxobutanoate + NADPH + H(+). Its pathway is amino-acid biosynthesis; L-isoleucine biosynthesis; L-isoleucine from 2-oxobutanoate: step 2/4. The protein operates within amino-acid biosynthesis; L-valine biosynthesis; L-valine from pyruvate: step 2/4. Functionally, involved in the biosynthesis of branched-chain amino acids (BCAA). Catalyzes an alkyl-migration followed by a ketol-acid reduction of (S)-2-acetolactate (S2AL) to yield (R)-2,3-dihydroxy-isovalerate. In the isomerase reaction, S2AL is rearranged via a Mg-dependent methyl migration to produce 3-hydroxy-3-methyl-2-ketobutyrate (HMKB). In the reductase reaction, this 2-ketoacid undergoes a metal-dependent reduction by NADPH to yield (R)-2,3-dihydroxy-isovalerate. This is Ketol-acid reductoisomerase (NADP(+)) from Polynucleobacter necessarius subsp. necessarius (strain STIR1).